The chain runs to 363 residues: Chorismate synthase (363 aa).

2 residues coordinate NADP(+): Arg-48 and Arg-54. FMN contacts are provided by residues 125 to 127, 237 to 238, Gly-277, 292 to 296, and Arg-318; these read RSS, NA, and KPTSS.

It belongs to the chorismate synthase family. In terms of assembly, homotetramer. Requires FMNH2 as cofactor.

It catalyses the reaction 5-O-(1-carboxyvinyl)-3-phosphoshikimate = chorismate + phosphate. Its pathway is metabolic intermediate biosynthesis; chorismate biosynthesis; chorismate from D-erythrose 4-phosphate and phosphoenolpyruvate: step 7/7. Its function is as follows. Catalyzes the anti-1,4-elimination of the C-3 phosphate and the C-6 proR hydrogen from 5-enolpyruvylshikimate-3-phosphate (EPSP) to yield chorismate, which is the branch point compound that serves as the starting substrate for the three terminal pathways of aromatic amino acid biosynthesis. This reaction introduces a second double bond into the aromatic ring system. The chain is Chorismate synthase from Pseudomonas entomophila (strain L48).